A 435-amino-acid polypeptide reads, in one-letter code: Probable alpha-galactosidase B (435 aa).

Residues 1-18 (MLTSLSLTALALLPSANA) form the signal peptide. An intrachain disulfide couples C41 to C73. The N-linked (GlcNAc...) asparagine glycan is linked to N81. Residues C123 and C153 are joined by a disulfide bond. Residue D151 is the Nucleophile of the active site. Residues N158 and N176 are each glycosylated (N-linked (GlcNAc...) asparagine). 221–225 (DWGQA) is a substrate binding site. N232 carries N-linked (GlcNAc...) asparagine glycosylation. The active-site Proton donor is D243. N-linked (GlcNAc...) asparagine glycosylation is present at N378.

It belongs to the glycosyl hydrolase 27 family.

Its subcellular location is the secreted. The catalysed reaction is Hydrolysis of terminal, non-reducing alpha-D-galactose residues in alpha-D-galactosides, including galactose oligosaccharides, galactomannans and galactolipids.. In terms of biological role, hydrolyzes a variety of simple alpha-D-galactoside as well as more complex molecules such as oligosaccharides and polysaccharides. This is Probable alpha-galactosidase B (agl1) from Penicillium simplicissimum.